A 310-amino-acid chain; its full sequence is HPr kinase/phosphorylase (310 aa).

Active-site residues include histidine 138 and lysine 159. Position 153–160 (glycine 153–serine 160) interacts with ATP. Serine 160 lines the Mg(2+) pocket. Aspartate 177 (proton acceptor; for phosphorylation activity. Proton donor; for dephosphorylation activity) is an active-site residue. The segment at leucine 201 to asparagine 210 is important for the catalytic mechanism of both phosphorylation and dephosphorylation. Glutamate 202 contributes to the Mg(2+) binding site. Residue arginine 243 is part of the active site. Residues proline 264–arginine 269 are important for the catalytic mechanism of dephosphorylation.

The protein belongs to the HPrK/P family. As to quaternary structure, homohexamer. The cofactor is Mg(2+).

It catalyses the reaction [HPr protein]-L-serine + ATP = [HPr protein]-O-phospho-L-serine + ADP + H(+). The catalysed reaction is [HPr protein]-O-phospho-L-serine + phosphate + H(+) = [HPr protein]-L-serine + diphosphate. Functionally, catalyzes the ATP- as well as the pyrophosphate-dependent phosphorylation of a specific serine residue in HPr, a phosphocarrier protein of the phosphoenolpyruvate-dependent sugar phosphotransferase system (PTS). HprK/P also catalyzes the pyrophosphate-producing, inorganic phosphate-dependent dephosphorylation (phosphorolysis) of seryl-phosphorylated HPr (P-Ser-HPr). The two antagonistic activities of HprK/P are regulated by several intracellular metabolites, which change their concentration in response to the absence or presence of rapidly metabolisable carbon sources (glucose, fructose, etc.) in the growth medium. Also phosphorylates/dephosphorylates the HPr-like catabolite repression protein crh on a specific serine residue. Therefore, by controlling the phosphorylation state of HPr and crh, HPrK/P is a sensor enzyme that plays a major role in the regulation of carbon metabolism and sugar transport: it mediates carbon catabolite repression (CCR), and regulates PTS-catalyzed carbohydrate uptake and inducer exclusion. The chain is HPr kinase/phosphorylase from Shouchella clausii (strain KSM-K16) (Alkalihalobacillus clausii).